The chain runs to 243 residues: NAD-dependent protein deacylase SIR2rp3 (243 aa).

One can recognise a Deacetylase sirtuin-type domain in the interval 1–239 (MKACRCITIL…PTWVDQVLKE (239 aa)). 12–31 (GAGISAESGISTFRDSNGLW) contacts NAD(+). 2 residues coordinate substrate: Y56 and R59. 95–98 (QNVD) contacts NAD(+). H113 acts as the Proton acceptor in catalysis. Zn(2+) contacts are provided by C121 and C141. Residues 181–183 (GTS) and A225 contribute to the NAD(+) site.

The protein belongs to the sirtuin family. Class III subfamily. Requires Zn(2+) as cofactor.

The protein resides in the mitochondrion. It carries out the reaction N(6)-malonyl-L-lysyl-[protein] + NAD(+) + H2O = 2''-O-malonyl-ADP-D-ribose + nicotinamide + L-lysyl-[protein]. The enzyme catalyses N(6)-succinyl-L-lysyl-[protein] + NAD(+) + H2O = 2''-O-succinyl-ADP-D-ribose + nicotinamide + L-lysyl-[protein]. The catalysed reaction is N(6)-glutaryl-L-lysyl-[protein] + NAD(+) + H2O = 2''-O-glutaryl-ADP-D-ribose + nicotinamide + L-lysyl-[protein]. In terms of biological role, NAD-dependent lysine demalonylase, desuccinylase and deglutarylase that specifically removes malonyl, succinyl and glutaryl groups on target proteins. Has weak NAD-dependent protein deacetylase activity; however this activity may not be physiologically relevant in vivo. The protein is NAD-dependent protein deacylase SIR2rp3 (SIR2rp3) of Leishmania major.